The chain runs to 363 residues: Fructose-bisphosphate aldolase C (363 aa).

Residues Arg-56 and Lys-147 each contribute to the substrate site. The active-site Schiff-base intermediate with dihydroxyacetone-P is Lys-230.

Belongs to the class I fructose-bisphosphate aldolase family. In terms of assembly, homotetramer. Expressed in brain but not in liver or muscle.

It catalyses the reaction beta-D-fructose 1,6-bisphosphate = D-glyceraldehyde 3-phosphate + dihydroxyacetone phosphate. It functions in the pathway carbohydrate degradation; glycolysis; D-glyceraldehyde 3-phosphate and glycerone phosphate from D-glucose: step 4/4. This chain is Fructose-bisphosphate aldolase C (aldoc), found in Carassius auratus (Goldfish).